Here is a 577-residue protein sequence, read N- to C-terminus: Glucose-6-phosphate 1-dehydrogenase, chloroplastic (577 aa).

The segment at 1 to 20 (MGVQLRLNPCSSSSAATSPS) is disordered. The N-terminal 63 residues, 1-63 (MGVQLRLNPC…QPRKHFEVFS (63 aa)), are a transit peptide targeting the chloroplast. The segment covering 11-20 (SSSSAATSPS) has biased composition (low complexity). Residues 97–104 (GASGDLAK) and Arg131 each bind NADP(+). A disulfide bridge links Cys149 with Cys157. Lys234 contacts NADP(+). D-glucose 6-phosphate contacts are provided by residues Lys234, 264-268 (HYLGK), Glu302, and Asp321. Catalysis depends on His326, which acts as the Proton acceptor. Lys419 contacts NADP(+). Positions 422 and 427 each coordinate D-glucose 6-phosphate. NADP(+) is bound by residues Arg428, Arg432, and Arg461. Residue Gln463 participates in D-glucose 6-phosphate binding. NADP(+) is bound by residues 469–471 (YLK) and Arg554.

This sequence belongs to the glucose-6-phosphate dehydrogenase family. Homodimer. In terms of tissue distribution, green tissues, leaves and chloroplasts.

It localises to the plastid. It is found in the chloroplast. The enzyme catalyses D-glucose 6-phosphate + NADP(+) = 6-phospho-D-glucono-1,5-lactone + NADPH + H(+). Its pathway is carbohydrate degradation; pentose phosphate pathway; D-ribulose 5-phosphate from D-glucose 6-phosphate (oxidative stage): step 1/3. With respect to regulation, regulated by metabolites. Post-translationally inactivated by cysteine-mediated redox modification via the ferredoxin-thioredoxin system in the light and this avoids futile cycles with photosynthetic CO2 fixation. In terms of biological role, catalyzes the rate-limiting step of the oxidative pentose-phosphate pathway, which represents a route for the dissimilation of carbohydrates besides glycolysis. The main function of this enzyme is to provide reducing power (NADPH) and pentose phosphates for fatty acid and nucleic acid synthesis which are involved in membrane synthesis and cell division. The chain is Glucose-6-phosphate 1-dehydrogenase, chloroplastic from Solanum tuberosum (Potato).